A 602-amino-acid polypeptide reads, in one-letter code: RNA-binding NOB1-like protein (602 aa).

The tract at residues 1–25 is disordered; sequence MDPKPTSMWSSIVKKDPPSKPPVND. The 87-residue stretch at 48 to 134 folds into the PINc domain; the sequence is VVDANAIIEG…LKLIALSYTL (87 aa). Disordered stretches follow at residues 258-278 and 301-331; these read SQGQYDDDDDASDWRPAVSRS and IQKDQEADKARHTKEANETHAKDSGKNGEDI. Residues 301–329 are compositionally biased toward basic and acidic residues; it reads IQKDQEADKARHTKEANETHAKDSGKNGE. Residues 331 to 365 adopt a coiled-coil conformation; sequence ISSILKDMRLEEESLRALQEETEETNAEATLINGE. The NOB1 zinc-finger motif lies at 452–522; that stretch reads IRQLHRWILK…QYSIPMPKGG (71 aa). Zn(2+) contacts are provided by C462, C465, C477, and C480.

It belongs to the NOB1 family. As to quaternary structure, component of the small ribosomal subunit, ribosomal RNA processing complex (SSU RRP complex). In terms of tissue distribution, highly expressed in flowers and siliques and at lower levels in roots, hypocotyls, stems, leaves and seeds.

It is found in the nucleus. The protein localises to the nucleoplasm. It localises to the cytoplasm. Functionally, essential protein required during embryogenesis and pollen development. Endonuclease cleaving pre-rRNA at the 3' end of the mature 18S rRNA (D-site); cleaves 20S pre-rRNA in the cytoplasm. Required for processing of 20S pre-rRNA precursor and biogenesis of 40S ribosomal subunits. The chain is RNA-binding NOB1-like protein from Arabidopsis thaliana (Mouse-ear cress).